We begin with the raw amino-acid sequence, 372 residues long: Heat-inducible transcription repressor HrcA (372 aa).

The disordered stretch occupies residues 300–334 (YGRSGAAGEPAGNDPVGEPETESETESQTNDTEPI).

It belongs to the HrcA family.

Negative regulator of class I heat shock genes (grpE-dnaK-dnaJ and groELS operons). Prevents heat-shock induction of these operons. The sequence is that of Heat-inducible transcription repressor HrcA from Bifidobacterium longum (strain DJO10A).